The chain runs to 272 residues: GATA zinc finger domain-containing protein 1 (272 aa).

The GATA-type zinc finger occupies Cys9–Cys33. The interval Thr67 to Arg120 is disordered. Residue Lys167 is modified to N6-acetyllysine. Lys265 participates in a covalent cross-link: Glycyl lysine isopeptide (Lys-Gly) (interchain with G-Cter in SUMO2).

Its subcellular location is the nucleus. The chain is GATA zinc finger domain-containing protein 1 (GATAD1) from Bos taurus (Bovine).